The primary structure comprises 159 residues: Probable acetolactate synthase small subunit (159 aa).

One can recognise an ACT domain in the interval threonine 4–glutamate 78.

It belongs to the acetolactate synthase small subunit family. In terms of assembly, dimer of large and small chains.

It catalyses the reaction 2 pyruvate + H(+) = (2S)-2-acetolactate + CO2. Its pathway is amino-acid biosynthesis; L-isoleucine biosynthesis; L-isoleucine from 2-oxobutanoate: step 1/4. It participates in amino-acid biosynthesis; L-valine biosynthesis; L-valine from pyruvate: step 1/4. In Archaeoglobus fulgidus (strain ATCC 49558 / DSM 4304 / JCM 9628 / NBRC 100126 / VC-16), this protein is Probable acetolactate synthase small subunit (ilvH).